Reading from the N-terminus, the 435-residue chain is Methylenetetrahydrofolate--tRNA-(uracil-5-)-methyltransferase TrmFO (435 aa).

An FAD-binding site is contributed by 9–14 (GAGLAG).

Belongs to the MnmG family. TrmFO subfamily. FAD is required as a cofactor.

It localises to the cytoplasm. The catalysed reaction is uridine(54) in tRNA + (6R)-5,10-methylene-5,6,7,8-tetrahydrofolate + NADH + H(+) = 5-methyluridine(54) in tRNA + (6S)-5,6,7,8-tetrahydrofolate + NAD(+). The enzyme catalyses uridine(54) in tRNA + (6R)-5,10-methylene-5,6,7,8-tetrahydrofolate + NADPH + H(+) = 5-methyluridine(54) in tRNA + (6S)-5,6,7,8-tetrahydrofolate + NADP(+). In terms of biological role, catalyzes the folate-dependent formation of 5-methyl-uridine at position 54 (M-5-U54) in all tRNAs. The polypeptide is Methylenetetrahydrofolate--tRNA-(uracil-5-)-methyltransferase TrmFO (Staphylococcus epidermidis (strain ATCC 35984 / DSM 28319 / BCRC 17069 / CCUG 31568 / BM 3577 / RP62A)).